Reading from the N-terminus, the 495-residue chain is YTH domain-containing protein ECT3 (495 aa).

The YTH domain maps to 261 to 398; the sequence is AKFYVIKSYS…EQGIKVIKIF (138 aa). RNA is bound by residues 267-269, Asp273, 283-284, Asn316, Trp340, Trp345, and Trp353; these read KSY and WS.

As to expression, expressed in the shoot apex, at the sites of leaf formation, and in emerging leaves.

It localises to the cytoplasm. Functionally, specifically recognizes and binds N6-methyladenosine (m6A)-containing RNAs, and regulates mRNA stability. M6A is a modification present at internal sites of mRNAs and some non-coding RNAs and plays a role in mRNA stability and processing. Required for the correct timing of leaf formation and normal leaf morphology. Required for proper trichome branching and morphology. Functions redundantly with ECT2. This chain is YTH domain-containing protein ECT3, found in Arabidopsis thaliana (Mouse-ear cress).